The following is a 1777-amino-acid chain: Non-reducing polyketide synthase nscA (1777 aa).

Positions 27–261 (DLFRRLDQHS…PLPVYDGLCH (235 aa)) are N-terminal acylcarrier protein transacylase domain (SAT). The Ketosynthase family 3 (KS3) domain maps to 396–829 (SSKLAIVGMA…GGNTTLLLED (434 aa)). Active-site for beta-ketoacyl synthase activity residues include Cys-569, His-704, and His-747. The tract at residues 934 to 1212 (AFTGQGAYYH…SAIPSCRRNE (279 aa)) is malonyl-CoA:ACP transacylase (MAT) domain. Residues 1297–1616 (TSLVHQITAE…RLLMDRFFSP (320 aa)) are product template (PT) domain. Residues 1301–1437 (HQITAETVEA…ATIRFEDPEA (137 aa)) form an N-terminal hotdog fold region. A PKS/mFAS DH domain is found at 1301–1611 (HQITAETVEA…FRRVPRLLMD (311 aa)). His-1333 serves as the catalytic Proton acceptor; for dehydratase activity. The segment at 1465 to 1611 (ASRLSKPLAY…FRRVPRLLMD (147 aa)) is C-terminal hotdog fold. Residue Asp-1522 is the Proton donor; for dehydratase activity of the active site. Residues 1674-1704 (LLATSSKSSTPKESPIVTPAESERAEPVDNS) form a disordered region. Low complexity predominate over residues 1677-1688 (TSSKSSTPKESP). The Carrier domain maps to 1700-1777 (PVDNSMTSQC…EMTAWIEEYC (78 aa)). Ser-1737 bears the O-(pantetheine 4'-phosphoryl)serine mark.

The cofactor is pantetheine 4'-phosphate.

The protein operates within secondary metabolite biosynthesis. Non-reducing polyketide synthase; part of the gene cluster that mediates the biosynthesis of neosartoricin B, a prenylated anthracenone that probably exhibits T-cell antiproliferative activity, suggestive of a physiological role as an immunosuppressive agent. The non-reducing polyketide synthase nscA probably synthesizes and cyclizes the decaketide backbone. The hydrolase nscB then mediates the product release through hydrolysis followed by spontaneous decarboxylation. The prenyltransferase nscD catalyzes the addition of the dimethylallyl group to the aromatic C5. The FAD-dependent monooxygenase nscC is then responsible for the stereospecific hydroxylation at C2. Neosartoricin B can be converted into two additional compounds neosartoricins C and D. Neosartoricin C is a spirocyclic compound that is cyclized through the attack of C3 hydroxyl on C14, followed by dehydration. On the other hand, neosartoricin D is a further cyclized compound in which attack of C2 on C14 in neosartoricin C results in the formation of the acetal-containing dioxabicyclo-octanone ring. Both of these compounds are novel and possibly represent related metabolites of the gene cluster. This Trichophyton equinum (strain ATCC MYA-4606 / CBS 127.97) (Horse ringworm fungus) protein is Non-reducing polyketide synthase nscA.